The primary structure comprises 120 residues: FK506-binding protein 1A (120 aa).

Residues 26–114 (GDNVDVHYKG…IFETELVGIK (89 aa)) form the PPIase FKBP-type domain.

The protein belongs to the FKBP-type PPIase family. FKBP1 subfamily.

It localises to the cytoplasm. It catalyses the reaction [protein]-peptidylproline (omega=180) = [protein]-peptidylproline (omega=0). Its function is as follows. PPIases accelerate the folding of proteins. It catalyzes the cis-trans isomerization of proline imidic peptide bonds in oligopeptides. This is FK506-binding protein 1A (fkr-2) from Neurospora crassa (strain ATCC 24698 / 74-OR23-1A / CBS 708.71 / DSM 1257 / FGSC 987).